Reading from the N-terminus, the 197-residue chain is Nucleoid occlusion factor SlmA (197 aa).

An HTH tetR-type domain is found at N6–L66. A DNA-binding region (H-T-H motif) is located at residues T29–F48.

This sequence belongs to the nucleoid occlusion factor SlmA family. Homodimer. Interacts with FtsZ.

It is found in the cytoplasm. The protein localises to the nucleoid. In terms of biological role, required for nucleoid occlusion (NO) phenomenon, which prevents Z-ring formation and cell division over the nucleoid. Acts as a DNA-associated cell division inhibitor that binds simultaneously chromosomal DNA and FtsZ, and disrupts the assembly of FtsZ polymers. SlmA-DNA-binding sequences (SBS) are dispersed on non-Ter regions of the chromosome, preventing FtsZ polymerization at these regions. The sequence is that of Nucleoid occlusion factor SlmA from Marinomonas sp. (strain MWYL1).